The chain runs to 386 residues: Paralemmin-1 (386 aa).

The stretch at 4–115 (VEANTLQQER…TKENLAEAAA (112 aa)) forms a coiled coil. Disordered regions lie at residues 21–40 (RKRQTEIENKRRQLEDDRRQ), 51–149 (ERWL…PMKA), 240–290 (EATA…TMIF), and 321–378 (DAES…AKKQ). Composition is skewed to basic and acidic residues over residues 24 to 40 (QTEIENKRRQLEDDRRQ) and 68 to 95 (AMKKQMQEDEVKTKELEETIQRLERELE). Low complexity predominate over residues 97 to 116 (LENSSSVTSTKENLAEAAAP). 3 stretches are compositionally biased toward basic and acidic residues: residues 259 to 282 (PRREITGLQAKPRENSTEGAEPSR), 322 to 334 (AESKAEPEGKDHA), and 365 to 377 (EAKEAEPDMDAKK). S-palmitoyl cysteine attachment occurs at residues C380 and C382. Cysteine methyl ester is present on C383. C383 carries the S-farnesyl cysteine lipid modification. Positions 384–386 (TVM) are cleaved as a propeptide — removed in mature form.

It belongs to the paralemmin family. Interacts with dopamine receptor DRD3. Phosphorylated. In terms of tissue distribution, expressed in the lens (at protein level). Highly expressed in forebrain and cerebellum with lower expression in adrenal gland and heart. Expression weak or undetectable in other tissues.

Its subcellular location is the cell membrane. It is found in the cell projection. It localises to the filopodium membrane. The protein resides in the axon. The protein localises to the dendrite. Its subcellular location is the dendritic spine. It is found in the basolateral cell membrane. It localises to the apicolateral cell membrane. Involved in plasma membrane dynamics and cell process formation. Isoform 1 and isoform 2 are necessary for axonal and dendritic filopodia induction, for dendritic spine maturation and synapse formation in a palmitoylation-dependent manner. This chain is Paralemmin-1 (PALM), found in Gallus gallus (Chicken).